A 410-amino-acid polypeptide reads, in one-letter code: MAIILVRAASPGLSAADSISHQGTLQCSTLLKTKRPAARRWMPCSLLGLHPWEAGRPSPAVYSSLAVNPAGEAVVSSEQKVYDVVLKQAALLKRQLRTPVLDARPQDMDMPRNGLKEAYDRCGEICEEYAKTFYLGTMLMTEERRRAIWAIYVWCRRTDELVDGPNANYITPTALDRWEKRLEDLFTGRPYDMLDAALSDTISRFPIDIQPFRDMIEGMRSDLRKTRYNNFDELYMYCYYVAGTVGLMSVPVMGIATESKATTESVYSAALALGIANQLTNILRDVGEDARRGRIYLPQDELAQAGLSDEDIFKGVVTNRWRNFMKRQIKRARMFFEEAERGVTELSQASRWPVWASLLLYRQILDEIEANDYNNFTKRAYVGKGKKLLALPVAYGKSLLLPCSLRNGQT.

A chloroplast-targeting transit peptide spans 1–62 (MAIILVRAAS…EAGRPSPAVY (62 aa)).

Belongs to the phytoene/squalene synthase family. As to quaternary structure, monomer. Expressed in embryos, endosperm and seedling leaves. Expressed in leaves and endosperm.

It is found in the plastid. The protein localises to the chloroplast stroma. The enzyme catalyses 2 (2E,6E,10E)-geranylgeranyl diphosphate = 15-cis-phytoene + 2 diphosphate. Its pathway is carotenoid biosynthesis; phytoene biosynthesis; all-trans-phytoene from geranylgeranyl diphosphate: step 1/1. Its function is as follows. Catalyzes the conversion of geranylgeranyl diphosphate to phytoene. Mediates the first committed step in carotenoid biosynthesis. This is Phytoene synthase 1, chloroplastic from Zea mays (Maize).